Reading from the N-terminus, the 209-residue chain is uncharacterized protein (209 aa).

2 disordered regions span residues 1 to 80 (MFVR…PPVE) and 164 to 197 (LPAG…PGME). Residues 178 to 189 (SRGSSRSSCSQR) are compositionally biased toward low complexity.

This is an uncharacterized protein from Homo sapiens (Human).